The sequence spans 624 residues: Glutamine--fructose-6-phosphate aminotransferase [isomerizing] (624 aa).

Residue Cys2 is the Nucleophile; for GATase activity of the active site. Positions Cys2–Asp225 constitute a Glutamine amidotransferase type-2 domain. SIS domains follow at residues Ser297–Thr436 and Leu469–Pro614. Catalysis depends on Lys619, which acts as the For Fru-6P isomerization activity.

In terms of assembly, homodimer.

The protein resides in the cytoplasm. It carries out the reaction D-fructose 6-phosphate + L-glutamine = D-glucosamine 6-phosphate + L-glutamate. Its function is as follows. Catalyzes the first step in hexosamine metabolism, converting fructose-6P into glucosamine-6P using glutamine as a nitrogen source. The protein is Glutamine--fructose-6-phosphate aminotransferase [isomerizing] of Mycobacterium bovis (strain ATCC BAA-935 / AF2122/97).